We begin with the raw amino-acid sequence, 276 residues long: Putative pyruvate, phosphate dikinase regulatory protein 2 (276 aa).

146–153 (GVSRTSKT) lines the ADP pocket.

Belongs to the pyruvate, phosphate/water dikinase regulatory protein family. PDRP subfamily.

The catalysed reaction is N(tele)-phospho-L-histidyl/L-threonyl-[pyruvate, phosphate dikinase] + ADP = N(tele)-phospho-L-histidyl/O-phospho-L-threonyl-[pyruvate, phosphate dikinase] + AMP + H(+). The enzyme catalyses N(tele)-phospho-L-histidyl/O-phospho-L-threonyl-[pyruvate, phosphate dikinase] + phosphate + H(+) = N(tele)-phospho-L-histidyl/L-threonyl-[pyruvate, phosphate dikinase] + diphosphate. Its function is as follows. Bifunctional serine/threonine kinase and phosphorylase involved in the regulation of the pyruvate, phosphate dikinase (PPDK) by catalyzing its phosphorylation/dephosphorylation. The chain is Putative pyruvate, phosphate dikinase regulatory protein 2 from Enterococcus faecalis (strain ATCC 700802 / V583).